The chain runs to 951 residues: Leucine-rich repeat-containing G-protein coupled receptor 4 (951 aa).

A signal peptide spans Met-1–Ala-24. Positions Ala-25–Ala-57 constitute an LRRNT domain. The Extracellular segment spans residues Ala-25–Thr-544. Disulfide bonds link Cys-29–Cys-35 and Cys-33–Cys-43. LRR repeat units lie at residues Phe-58–Asn-79, Phe-82–Gly-103, Glu-106–Gly-127, Ala-130–Gly-151, Gln-154–Pro-177, Thr-178–Asn-199, Ser-202–Gly-223, Asn-226–Leu-247, Ser-249–Gly-270, Leu-273–Asn-294, His-320–Asn-341, Met-344–Arg-365, Ala-366–Gly-387, Ser-390–Lys-411, and Thr-414–Gly-435. N-linked (GlcNAc...) asparagine glycosylation occurs at Asn-68. N-linked (GlcNAc...) asparagine glycans are attached at residues Asn-188 and Asn-199. A glycan (N-linked (GlcNAc...) asparagine) is linked at Asn-294. The cysteines at positions 339 and 364 are disulfide-linked. 2 disulfides stabilise this stretch: Cys-470–Cys-522 and Cys-471–Cys-476. Residues Asn-487–Ser-512 are disordered. Positions Thr-501 to Ala-510 are enriched in low complexity. Residue Asn-505 is glycosylated (N-linked (GlcNAc...) asparagine). A helical transmembrane segment spans residues Val-545–Ala-565. Residues Ser-566–Leu-575 lie on the Cytoplasmic side of the membrane. A helical transmembrane segment spans residues Phe-576–Phe-596. At Leu-597 to Lys-619 the chain is on the extracellular side. A disulfide bridge connects residues Cys-618 and Cys-693. Residues Val-620–Ala-640 form a helical membrane-spanning segment. Residues Val-641–Gln-661 lie on the Cytoplasmic side of the membrane. Residues Phe-662–Phe-682 form a helical membrane-spanning segment. At His-683–Ser-703 the chain is on the extracellular side. Residues Leu-704–Ile-724 form a helical membrane-spanning segment. Residues Tyr-725 to Asn-756 are Cytoplasmic-facing. A helical membrane pass occupies residues Cys-757 to Ile-777. Residues Ser-778 to Lys-783 are Extracellular-facing. Residues Ser-784–Phe-804 traverse the membrane as a helical segment. Topologically, residues Asn-805–Asp-951 are cytoplasmic. Ser-920 is modified (phosphoserine).

It belongs to the G-protein coupled receptor 1 family.

The protein localises to the cell membrane. Functionally, receptor for R-spondins that potentiates the canonical Wnt signaling pathway and is involved in the formation of various organs. Upon binding to R-spondins (RSPO1, RSPO2, RSPO3 or RSPO4), associates with phosphorylated LRP6 and frizzled receptors that are activated by extracellular Wnt receptors, triggering the canonical Wnt signaling pathway to increase expression of target genes. In contrast to classical G-protein coupled receptors, does not activate heterotrimeric G-proteins to transduce the signal. Its function as activator of the Wnt signaling pathway is required for the development of various organs, including liver, kidney, intestine, bone, reproductive tract and eye. May also act as a receptor for norrin (NDP), such results however require additional confirmation in vivo. Required during spermatogenesis to activate the Wnt signaling pathway in peritubular myoid cells. Required for the maintenance of intestinal stem cells and Paneth cell differentiation in postnatal intestinal crypts. Acts as a regulator of bone formation and remodeling. Involved in kidney development; required for maintaining the ureteric bud in an undifferentiated state. Involved in the development of the anterior segment of the eye. Required during erythropoiesis. Also acts as a negative regulator of innate immunity by inhibiting TLR2/TLR4 associated pattern-recognition and pro-inflammatory cytokine production. Plays an important role in regulating the circadian rhythms of plasma lipids, partially through regulating the rhythmic expression of MTTP. Required for proper development of GnRH neurons (gonadotropin-releasing hormone expressing neurons) that control the release of reproductive hormones from the pituitary gland. In Mus musculus (Mouse), this protein is Leucine-rich repeat-containing G-protein coupled receptor 4 (Lgr4).